The chain runs to 655 residues: Methyl-accepting chemotaxis protein McpC (655 aa).

Topologically, residues 1–8 are cytoplasmic; the sequence is MFKKLHMK. The chain crosses the membrane as a helical span at residues 9-29; it reads IAVFVSIMLIITVVLLMLSSY. The Extracellular portion of the chain corresponds to 30–276; the sequence is LTLKPMITED…LMWISDKMNR (247 aa). A Cache domain is found at 148–225; it reads WTEPYKDVVT…SNQGKNISKD (78 aa). A helical transmembrane segment spans residues 277 to 297; sequence ANLWISLIALIITIILSYFLA. The HAMP domain occupies 298–350; that stretch reads KTITGPIQQLIVKTKAVSAGDLTVRAESKSKDEVGILTRDFNLMVENMKEMVE. Topologically, residues 298 to 655 are cytoplasmic; sequence KTITGPIQQL…LMNTIAKFTL (358 aa). In terms of domain architecture, Methyl-accepting transducer spans 369–619; it reads VAAETNETSG…ESAAAAEEVN (251 aa).

The protein belongs to the methyl-accepting chemotaxis (MCP) protein family. In terms of assembly, interacts with FloT. In terms of processing, some glutamine residues are deamidated to glutamate by CheD and subsequently methylated.

The protein localises to the cell membrane. It is found in the membrane raft. Its function is as follows. Chemotactic-signal transducers respond to changes in the concentration of attractants and repellents in the environment, transduce a signal from the outside to the inside of the cell, and facilitate sensory adaptation through the variation of the level of methylation. All amino acids serve as attractants in B.subtilis, they appear to cause an increase in the turnover methyl groups, leading to methylation of an unidentified acceptor, while repellents have been shown to cause a decrease in methyl group turnover. The methyl groups are added by a methyltransferase and removed by a methylesterase. McpC is required for taxis to cysteine, proline, threonine, glycine, serine, lysine, valine and arginine and for aspartate, glutamine, histidine and glutamate. Primarily mediates response to positive stimulus of PTS carbohydrates. Greatly influences the duration or magnitude of the response to negative PTS carbohydrate stimulus. The polypeptide is Methyl-accepting chemotaxis protein McpC (mcpC) (Bacillus subtilis (strain 168)).